We begin with the raw amino-acid sequence, 160 residues long: MARQKFSGKGGKGKSKKGQQSTAPRRRVEFKYKGFTLPELQEMPIKKFIEIVPARQRRTMSRGITPNQRKLVMKIKKARRLVNRGKEPRVIRTHCRDFVITPEMIGLTISIYTGKQFKEIKLVEETLGRFLGEMAPTRGIVQHGSPGMGATRGSMFVPIK.

The disordered stretch occupies residues 1-27; that stretch reads MARQKFSGKGGKGKSKKGQQSTAPRRR.

The protein belongs to the universal ribosomal protein uS19 family.

Functionally, protein S19 forms a complex with S13 that binds strongly to the 16S ribosomal RNA. The sequence is that of Small ribosomal subunit protein uS19 from Methanococcus vannielii (strain ATCC 35089 / DSM 1224 / JCM 13029 / OCM 148 / SB).